A 734-amino-acid polypeptide reads, in one-letter code: ATP-dependent RNA helicase DDX50 (734 aa).

The disordered stretch occupies residues 1–131 (MPGKLLWGDI…KAEETLTREQ (131 aa)). The span at 11–20 (MELEAPLEES) shows a compositional bias: acidic residues. Composition is skewed to basic and acidic residues over residues 38-51 (HSES…RENG) and 67-86 (REKL…EFSP). Phosphoserine is present on residues S41, S81, S85, S113, S119, and S120. A compositionally biased stretch (basic and acidic residues) spans 115–131 (NSHKSSDKAEETLTREQ). A Glycyl lysine isopeptide (Lys-Gly) (interchain with G-Cter in SUMO2) cross-link involves residue K122. The Q motif motif lies at 134-162 (GAFSNFSISEETIKLLKGRGVTYLFPIQV). The region spanning 165–344 (FGPVYEGKDL…KKYMKSRYEQ (180 aa)) is the Helicase ATP-binding domain. 178–185 (ARTGTGKT) contributes to the ATP binding site. Phosphothreonine is present on T244. The DEVD box motif lies at 287 to 290 (DEVD). A Helicase C-terminal domain is found at 377 to 521 (DVLQVYSGSE…GVPSTMDLVK (145 aa)). S515 is subject to Phosphoserine. A disordered region spans residues 664–734 (YYDGNTSSNP…RSGGHKRNFD (71 aa)). The segment covering 679 to 698 (WSGGRSGRSGRSGGRSGGRS) has biased composition (gly residues). Positions 699–709 (GRQSRQGSRSG) are enriched in low complexity. Basic residues predominate over residues 717–734 (RSGNRNRSRSGGHKRNFD).

Belongs to the DEAD box helicase family. DDX21/DDX50 subfamily. Interacts with C1QBP. Interacts with the ubiquitin ligase CTLH complex through GID4. Interacts with TICAM1.

Its subcellular location is the nucleus. The protein resides in the nucleolus. It localises to the cytoplasm. The catalysed reaction is ATP + H2O = ADP + phosphate + H(+). Its function is as follows. ATP-dependent RNA helicase that may play a role in various aspects of RNA metabolism including pre-mRNA splicing or ribosomal RNA production. Also acts as a viral restriction factor and promotes the activation of the NF-kappa-B and IRF3 signaling pathways following its stimulation with viral RNA or infection with RNA and DNA viruses. For instance, decreases vaccinia virus, herpes simplex virus, Zika virus or dengue virus replication during the early stage of infection. Mechanistically, acts via the adapter TICAM1 and independently of the DDX1-DDX21-DHX36 helicase complex to induce the production of interferon-beta. The polypeptide is ATP-dependent RNA helicase DDX50 (Ddx50) (Mus musculus (Mouse)).